Here is a 236-residue protein sequence, read N- to C-terminus: MEKREELYRGKAKSVYKTDDADRLILLFRNDTSAFDGKRIEQLDRKGMVNNKFNAFIMQKLEEAGVPTQFDKLLGDNECLVKKLDMIPVECVVRNYAAGSLVKRLGVEEGIKLEPSTFELFLKNDEKGDPFINESHVVAFGWGTAEQLVEMKKLSLKVNEVLSKLFDDAGLLLVDFKLEFGVFHGQIVLGDEFSPDGCRLWDKETRKKMDKDRFRQGLGDVIEAYEEVAKRLGVPL.

This sequence belongs to the SAICAR synthetase family.

It carries out the reaction 5-amino-1-(5-phospho-D-ribosyl)imidazole-4-carboxylate + L-aspartate + ATP = (2S)-2-[5-amino-1-(5-phospho-beta-D-ribosyl)imidazole-4-carboxamido]succinate + ADP + phosphate + 2 H(+). Its pathway is purine metabolism; IMP biosynthesis via de novo pathway; 5-amino-1-(5-phospho-D-ribosyl)imidazole-4-carboxamide from 5-amino-1-(5-phospho-D-ribosyl)imidazole-4-carboxylate: step 1/2. The sequence is that of Phosphoribosylaminoimidazole-succinocarboxamide synthase from Pseudomonas putida (strain ATCC 700007 / DSM 6899 / JCM 31910 / BCRC 17059 / LMG 24140 / F1).